Here is a 142-residue protein sequence, read N- to C-terminus: Hemoglobin subunit alpha-1 (142 aa).

The 141-residue stretch at 2–142 folds into the Globin domain; sequence LLSADDKKHI…VSTVLTSKYR (141 aa). Histidine 59 serves as a coordination point for O2. Histidine 88 contacts heme b.

This sequence belongs to the globin family. Heterotetramer of two alpha chains and two beta chains. In terms of tissue distribution, red blood cells.

Its function is as follows. Involved in oxygen transport from the lung to the various peripheral tissues. This chain is Hemoglobin subunit alpha-1 (hba1), found in Xenopus laevis (African clawed frog).